The sequence spans 922 residues: Band 3 anion transport protein (922 aa).

2 disordered regions span residues 1 to 36 and 355 to 389; these read MEGP…TMSN and QHPD…LRTR. Residues 1-416 are Cytoplasmic-facing; sequence MEGPGQDTED…LSDIRDALNP (416 aa). The segment covering 10–26 has biased composition (basic and acidic residues); it reads DALRRSLDPEGYEDTKG. Positions 27-36 are enriched in polar residues; it reads SRTSLGTMSN. The helical transmembrane segment at 417-440 threads the bilayer; it reads QCLAAVIFIYFAALSPAITFGGLL. At 441–448 the chain is on the extracellular side; the sequence is GEKTRGMM. A helical membrane pass occupies residues 449–469; that stretch reads GVSELLLSTSVQCLLFSLLSA. The Cytoplasmic segment spans residues 470 to 472; sequence QPL. The discontinuously helical transmembrane segment at 473–489 threads the bilayer; the sequence is LVVGFSGPLLVFEEAFF. Topologically, residues 490 to 498 are extracellular; the sequence is RFCEDHGLE. Residues 499–519 traverse the membrane as a helical segment; the sequence is YIVGRVWIGFWLILLVLLVVA. Over 520–531 the chain is Cytoplasmic; it reads CEGTVLVRYLSR. Residues 532 to 554 form a helical membrane-spanning segment; the sequence is YTQEIFSFLISLIFIYETFAKLV. Residues 555–581 are Extracellular-facing; it reads TIFEAHPLQQSYDTDVSTEPSVPKPNT. The chain crosses the membrane as a helical span at residues 582-602; it reads ALLSLVLMAGTFFLALFLRQF. Over 603–613 the chain is Cytoplasmic; the sequence is KNSVFLPGKVR. The chain crosses the membrane as a helical span at residues 614-634; it reads RLIGDFGVPISIFVMALADFF. At 635–674 the chain is on the extracellular side; that stretch reads IKDTYTQKLKVPRGLEVTNGTARGWFIHPMGSATPFPIWM. N-linked (GlcNAc...) asparagine glycosylation occurs at Asn653. Residues 675–695 form a helical membrane-spanning segment; that stretch reads MFASPVPALLVFILIFLETQI. At 696-711 the chain is on the cytoplasmic side; it reads TTLIVSKPERKLVKGS. The helical transmembrane segment at 712–730 threads the bilayer; that stretch reads GFHLDLLLIVAMGGLAALF. A discontinuously helical membrane pass occupies residues 731-748; that stretch reads GMPWLSATTVRTITHANA. Residues 749-771 are Cytoplasmic-facing; sequence LTVVGKSAVPGERAHIVEVKEQR. A run of 2 helical transmembrane segments spans residues 772 to 792 and 793 to 811; these read LSGL…PILK and YIPL…VTSL. Residues 812–849 lie on the Cytoplasmic side of the membrane; the sequence is FGIQLFDRILLLLMPPKYHPKEPYVTRVKTWRITSSPL. An intramembrane region (discontinuously helical) is located at residues 850–880; it reads TQILVVALLWGVKVSPASLRCPFVLVLTVPL. Over 881 to 922 the chain is Cytoplasmic; sequence RRLLLPRIFSEIELKCLDTDDAVVTFEEAEGQDVYNEVQMPS.

The protein belongs to the anion exchanger (TC 2.A.31) family. As to quaternary structure, a dimer in solution, it spans the membrane asymmetrically and appears to be tetrameric. Erythrocytes.

Its subcellular location is the cell membrane. The protein resides in the basolateral cell membrane. The catalysed reaction is hydrogencarbonate(in) + chloride(out) = hydrogencarbonate(out) + chloride(in). Functionally, functions both as a transporter that mediates electroneutral anion exchange across the cell membrane and as a structural protein. Major integral membrane glycoprotein of the erythrocyte membrane; required for normal flexibility and stability of the erythrocyte membrane and for normal erythrocyte shape via the interactions of its cytoplasmic domain with cytoskeletal proteins, glycolytic enzymes, and hemoglobin. Functions as a transporter that mediates the 1:1 exchange of inorganic anions across the erythrocyte membrane. Mediates chloride-bicarbonate exchange in the kidney, and is required for normal acidification of the urine. In Gallus gallus (Chicken), this protein is Band 3 anion transport protein (SLC4A1).